The primary structure comprises 495 residues: 4-aminobutyrate aminotransferase (495 aa).

160-161 contacts pyridoxal 5'-phosphate; the sequence is GS. Residue R216 participates in substrate binding. An N6-(pyridoxal phosphate)lysine modification is found at K350. A pyridoxal 5'-phosphate-binding site is contributed by T374.

It belongs to the class-III pyridoxal-phosphate-dependent aminotransferase family. Homodimer. Pyridoxal 5'-phosphate is required as a cofactor.

It carries out the reaction 4-aminobutanoate + 2-oxoglutarate = succinate semialdehyde + L-glutamate. The chain is 4-aminobutyrate aminotransferase (gabT) from Dictyostelium discoideum (Social amoeba).